The following is a 133-amino-acid chain: Alcohol dehydrogenase, 15 kDa subunit (133 aa).

An N-terminal signal peptide occupies residues 1 to 24 (MFRRIVPVLGLALGLGLASQAAMA). The interval 23–43 (MAQEQSPPPPPAVQGTPGKDF) is disordered. Glutamine 25 carries the post-translational modification Pyrrolidone carboxylic acid.

As to quaternary structure, the alcohol dehydrogenase multicomponent enzyme system is composed of a dehydrogenase subunit I (AdhA), a cytochrome c subunit II (AdhB) and a subunit III (AdhS).

It is found in the cell membrane. In terms of biological role, part of the alcohol dehydrogenase multicomponent enzyme system which is involved in the production of acetic acid and in the ethanol oxidase respiratory chain. Does not play an obligatory role for the alcohol dehydrogenase (ADH) activity. This chain is Alcohol dehydrogenase, 15 kDa subunit, found in Gluconobacter oxydans (strain 621H) (Gluconobacter suboxydans).